Reading from the N-terminus, the 110-residue chain is Large ribosomal subunit protein uL22 (110 aa).

This sequence belongs to the universal ribosomal protein uL22 family. As to quaternary structure, part of the 50S ribosomal subunit.

This protein binds specifically to 23S rRNA; its binding is stimulated by other ribosomal proteins, e.g. L4, L17, and L20. It is important during the early stages of 50S assembly. It makes multiple contacts with different domains of the 23S rRNA in the assembled 50S subunit and ribosome. Its function is as follows. The globular domain of the protein is located near the polypeptide exit tunnel on the outside of the subunit, while an extended beta-hairpin is found that lines the wall of the exit tunnel in the center of the 70S ribosome. The polypeptide is Large ribosomal subunit protein uL22 (Alkaliphilus metalliredigens (strain QYMF)).